We begin with the raw amino-acid sequence, 197 residues long: Holliday junction branch migration complex subunit RuvA (197 aa).

Positions 1-64 (MIGRLRGIVA…EDSVSLYGFL (64 aa)) are domain I. A domain II region spans residues 65 to 143 (REGERRLFRD…QFGAGGALPT (79 aa)). The segment at 144 to 153 (GSGPAPADPL) is flexible linker. Residues 153 to 197 (LSDATVALQQLGYKPAEAARMARDAFNEGDEVATVIRKALQSALR) are domain III.

It belongs to the RuvA family. Homotetramer. Forms an RuvA(8)-RuvB(12)-Holliday junction (HJ) complex. HJ DNA is sandwiched between 2 RuvA tetramers; dsDNA enters through RuvA and exits via RuvB. An RuvB hexamer assembles on each DNA strand where it exits the tetramer. Each RuvB hexamer is contacted by two RuvA subunits (via domain III) on 2 adjacent RuvB subunits; this complex drives branch migration. In the full resolvosome a probable DNA-RuvA(4)-RuvB(12)-RuvC(2) complex forms which resolves the HJ.

It is found in the cytoplasm. The RuvA-RuvB-RuvC complex processes Holliday junction (HJ) DNA during genetic recombination and DNA repair, while the RuvA-RuvB complex plays an important role in the rescue of blocked DNA replication forks via replication fork reversal (RFR). RuvA specifically binds to HJ cruciform DNA, conferring on it an open structure. The RuvB hexamer acts as an ATP-dependent pump, pulling dsDNA into and through the RuvAB complex. HJ branch migration allows RuvC to scan DNA until it finds its consensus sequence, where it cleaves and resolves the cruciform DNA. This chain is Holliday junction branch migration complex subunit RuvA, found in Stenotrophomonas maltophilia (strain K279a).